The chain runs to 206 residues: ATP phosphoribosyltransferase (206 aa).

Belongs to the ATP phosphoribosyltransferase family. Short subfamily. Heteromultimer composed of HisG and HisZ subunits.

The protein localises to the cytoplasm. It catalyses the reaction 1-(5-phospho-beta-D-ribosyl)-ATP + diphosphate = 5-phospho-alpha-D-ribose 1-diphosphate + ATP. It functions in the pathway amino-acid biosynthesis; L-histidine biosynthesis; L-histidine from 5-phospho-alpha-D-ribose 1-diphosphate: step 1/9. Its function is as follows. Catalyzes the condensation of ATP and 5-phosphoribose 1-diphosphate to form N'-(5'-phosphoribosyl)-ATP (PR-ATP). Has a crucial role in the pathway because the rate of histidine biosynthesis seems to be controlled primarily by regulation of HisG enzymatic activity. This Leptospira interrogans serogroup Icterohaemorrhagiae serovar copenhageni (strain Fiocruz L1-130) protein is ATP phosphoribosyltransferase.